Consider the following 111-residue polypeptide: High mobility group protein Z (111 aa).

Residues 6–72 (PKRPLSAYML…EYNKAVKEYE (67 aa)) constitute a DNA-binding region (HMG box). S11 bears the Phosphoserine mark. Positions 72 to 111 (EANGGTDSGAPKKRKKAAAKPAKKAKKKESSEEEEEDESE) are disordered. Basic residues predominate over residues 82 to 98 (PKKRKKAAAKPAKKAKK). Over residues 102–111 (SEEEEEDESE) the composition is skewed to acidic residues.

Belongs to the HMGB family.

It localises to the nucleus. It is found in the chromosome. The protein is High mobility group protein Z (HmgZ) of Drosophila melanogaster (Fruit fly).